Reading from the N-terminus, the 207-residue chain is N-(5'-phosphoribosyl)anthranilate isomerase (207 aa).

It belongs to the TrpF family.

It catalyses the reaction N-(5-phospho-beta-D-ribosyl)anthranilate = 1-(2-carboxyphenylamino)-1-deoxy-D-ribulose 5-phosphate. It functions in the pathway amino-acid biosynthesis; L-tryptophan biosynthesis; L-tryptophan from chorismate: step 3/5. The sequence is that of N-(5'-phosphoribosyl)anthranilate isomerase from Geotalea daltonii (strain DSM 22248 / JCM 15807 / FRC-32) (Geobacter daltonii).